Reading from the N-terminus, the 326-residue chain is Organic solute transporter subunit alpha (326 aa).

The Extracellular segment spans residues M1 to D28. N5 carries N-linked (GlcNAc...) asparagine glycosylation. A helical membrane pass occupies residues I29–F49. Residues I50 to T67 are Cytoplasmic-facing. The helical transmembrane segment at I68–V88 threads the bilayer. At P89–S99 the chain is on the extracellular side. A helical transmembrane segment spans residues A100–G120. The Cytoplasmic segment spans residues D121–K161. The helical transmembrane segment at L162–W182 threads the bilayer. Topologically, residues T183–A198 are extracellular. N-linked (GlcNAc...) asparagine glycosylation is found at N184 and N191. Residues I199 to M219 form a helical membrane-spanning segment. Over F220–A237 the chain is Cytoplasmic. Residues M238–L258 traverse the membrane as a helical segment. The N-linked (GlcNAc...) asparagine glycan is linked to N259. Topologically, residues N259–Y275 are extracellular. A helical membrane pass occupies residues M276 to L296. The Cytoplasmic segment spans residues Y297–A326.

The protein belongs to the OST-alpha family. As to quaternary structure, interacts with slc51b. The Ost-alpha/Ost-beta complex is a heterodimer composed of alpha (slc51a) and beta (slc51b) subunit.

It is found in the cell membrane. The protein localises to the endoplasmic reticulum membrane. It catalyses the reaction taurocholate(out) = taurocholate(in). The catalysed reaction is prostaglandin E2(out) = prostaglandin E2(in). It carries out the reaction estrone 3-sulfate(out) = estrone 3-sulfate(in). The enzyme catalyses dehydroepiandrosterone 3-sulfate(out) = dehydroepiandrosterone 3-sulfate(in). It catalyses the reaction tauroursodeoxycholate(out) = tauroursodeoxycholate(in). The catalysed reaction is glycoursodeoxycholate(out) = glycoursodeoxycholate(in). It carries out the reaction glycocholate(out) = glycocholate(in). The enzyme catalyses taurochenodeoxycholate(out) = taurochenodeoxycholate(in). It catalyses the reaction glycochenodeoxycholate(out) = glycochenodeoxycholate(in). The catalysed reaction is taurodeoxycholate(out) = taurodeoxycholate(in). It carries out the reaction glycodeoxycholate(out) = glycodeoxycholate(in). In terms of biological role, essential component of the Ost-alpha/Ost-beta complex, a heterodimer that acts as the intestinal basolateral transporter responsible for the translocation of bile acids (such as taurocholate), steroids (such as estrone sulfate), and eicosanoids (such as prostaglandin E2). The sequence is that of Organic solute transporter subunit alpha (slc51a) from Danio rerio (Zebrafish).